Here is an 84-residue protein sequence, read N- to C-terminus: Omega-theraphotoxin-Pm1a (84 aa).

A signal peptide spans 1–21; that stretch reads MKTSMLAVFVALPLAFVLTAA. The propeptide occupies 22–45; the sequence is TEERAHPNELVNSLVELVKLDAER. 3 disulfides stabilise this stretch: cysteine 52–cysteine 66, cysteine 59–cysteine 71, and cysteine 65–cysteine 78.

The protein belongs to the neurotoxin 10 (Hwtx-1) family. 41 (Jztx-36) subfamily. In terms of tissue distribution, expressed by the venom gland.

It is found in the secreted. In terms of biological role, omega-conotoxins act at presynaptic membranes, they bind and block voltage-gated calcium channels (Cav). This toxin inhibits barium currents (IBa) mediated by L-type voltage-gated calcium channels Cav1.2/CACNA1C (IC(50)=825 nM) and Cav1.3/CACNA1C (IC(50)=2240 nM). The sequence is that of Omega-theraphotoxin-Pm1a from Pelinobius muticus (King baboon spider).